Reading from the N-terminus, the 292-residue chain is 4-diphosphocytidyl-2-C-methyl-D-erythritol kinase (292 aa).

Lys-20 is a catalytic residue. Pro-103–Ser-113 serves as a coordination point for ATP. Residue Asp-145 is part of the active site.

The protein belongs to the GHMP kinase family. IspE subfamily.

It carries out the reaction 4-CDP-2-C-methyl-D-erythritol + ATP = 4-CDP-2-C-methyl-D-erythritol 2-phosphate + ADP + H(+). It functions in the pathway isoprenoid biosynthesis; isopentenyl diphosphate biosynthesis via DXP pathway; isopentenyl diphosphate from 1-deoxy-D-xylulose 5-phosphate: step 3/6. Functionally, catalyzes the phosphorylation of the position 2 hydroxy group of 4-diphosphocytidyl-2C-methyl-D-erythritol. The sequence is that of 4-diphosphocytidyl-2-C-methyl-D-erythritol kinase from Cupriavidus taiwanensis (strain DSM 17343 / BCRC 17206 / CCUG 44338 / CIP 107171 / LMG 19424 / R1) (Ralstonia taiwanensis (strain LMG 19424)).